A 926-amino-acid polypeptide reads, in one-letter code: Mating-type protein A-alpha Y3 (926 aa).

The homeobox DNA-binding region spans 147–206 (YKKPRPKFHSEYTPLLELYFHFNAYPTFADRRMLAEKTGMQTRQITVWFQNHRRRAKGPL). Disordered regions lie at residues 238–281 (SHLR…KVGK), 308–374 (QQAP…TSSA), 424–452 (GKGK…SRLN), and 625–734 (RARK…MNES). Composition is skewed to basic and acidic residues over residues 267–281 (KKPD…KVGK) and 326–338 (NAQD…ATKS). Residues 428 to 441 (PSQNLTSTPATFST) are compositionally biased toward polar residues. Basic and acidic residues predominate over residues 632–660 (KQAEKEARKEEKRARKEAKQAKKDRKEQR). Low complexity-rich tracts occupy residues 669 to 687 (STLD…SATS) and 699 to 724 (SSAS…SGTS).

The protein localises to the nucleus. Specifies A-alpha-3 mating-type. May regulate the expression of genes specific to the homokaryotic cell type. The chain is Mating-type protein A-alpha Y3 from Schizophyllum commune (Split gill fungus).